A 330-amino-acid polypeptide reads, in one-letter code: 4-hydroxythreonine-4-phosphate dehydrogenase (330 aa).

The substrate site is built by H136 and T137. A divalent metal cation is bound by residues H166, H211, and H266. Substrate is bound by residues K274, N283, and R292.

This sequence belongs to the PdxA family. Homodimer. It depends on Zn(2+) as a cofactor. Mg(2+) serves as cofactor. Requires Co(2+) as cofactor.

It localises to the cytoplasm. It carries out the reaction 4-(phosphooxy)-L-threonine + NAD(+) = 3-amino-2-oxopropyl phosphate + CO2 + NADH. The protein operates within cofactor biosynthesis; pyridoxine 5'-phosphate biosynthesis; pyridoxine 5'-phosphate from D-erythrose 4-phosphate: step 4/5. In terms of biological role, catalyzes the NAD(P)-dependent oxidation of 4-(phosphooxy)-L-threonine (HTP) into 2-amino-3-oxo-4-(phosphooxy)butyric acid which spontaneously decarboxylates to form 3-amino-2-oxopropyl phosphate (AHAP). The chain is 4-hydroxythreonine-4-phosphate dehydrogenase from Sodalis glossinidius (strain morsitans).